The following is a 178-amino-acid chain: Protein GrpE (178 aa).

This sequence belongs to the GrpE family. Homodimer.

The protein localises to the cytoplasm. Its function is as follows. Participates actively in the response to hyperosmotic and heat shock by preventing the aggregation of stress-denatured proteins, in association with DnaK and GrpE. It is the nucleotide exchange factor for DnaK and may function as a thermosensor. Unfolded proteins bind initially to DnaJ; upon interaction with the DnaJ-bound protein, DnaK hydrolyzes its bound ATP, resulting in the formation of a stable complex. GrpE releases ADP from DnaK; ATP binding to DnaK triggers the release of the substrate protein, thus completing the reaction cycle. Several rounds of ATP-dependent interactions between DnaJ, DnaK and GrpE are required for fully efficient folding. This Rickettsia prowazekii (strain Madrid E) protein is Protein GrpE.